An 82-amino-acid chain; its full sequence is Ice-structuring protein B (82 aa).

The N-terminal stretch at 1 to 23 (MALSLFTVGQLIFLFWTMRITEA) is a signal peptide. The propeptide at 24 to 44 (RPDPAAKAAPAAAAVPAAAAP) is removed by a dipeptidylpeptidase. Arginine 81 bears the Arginine amide mark.

It belongs to the type-I AFP family. In terms of processing, amidated. As to expression, detected in liver (at protein level).

It localises to the secreted. Its subcellular location is the extracellular space. Contributes to protect fish blood from freezing at subzero sea water temperatures. Lowers the blood freezing point. Binds to nascent ice crystals and prevents further growth. This is Ice-structuring protein B from Pseudopleuronectes americanus (Winter flounder).